A 557-amino-acid chain; its full sequence is Warthog protein 4 (557 aa).

Residues 1 to 20 form the signal peptide; it reads MRFSLLALVLLSSSYKFTYG. Residues 272–308 are disordered; sequence QETNPQPPPPPGQQGGFVQPQGFQPQGGFQPQGFQPQ. Low complexity predominate over residues 287–308; it reads GFVQPQGFQPQGGFQPQGFQPQ.

This sequence belongs to the hedgehog family. In terms of processing, the C-terminal domain displays an autoproteolysis activity.

The protein localises to the secreted. It is found in the cell surface. Its subcellular location is the cell membrane. It localises to the extracellular space. Its function is as follows. Intercellular signal essential for a variety of patterning events during development. This Caenorhabditis elegans protein is Warthog protein 4 (wrt-4).